The chain runs to 169 residues: Cell division inhibitor SulA (169 aa).

The segment at 106–112 is ftsZ binding; sequence ALRTGNY. The segment at 162–169 is lon protease binding; that stretch reads KIHSNLYH.

Belongs to the SulA family. Interacts with FtsZ. Post-translationally, is rapidly cleaved and degraded by the Lon protease once DNA damage is repaired.

Functionally, component of the SOS system and an inhibitor of cell division. Accumulation of SulA causes rapid cessation of cell division and the appearance of long, non-septate filaments. In the presence of GTP, binds a polymerization-competent form of FtsZ in a 1:1 ratio, thus inhibiting FtsZ polymerization and therefore preventing it from participating in the assembly of the Z ring. This mechanism prevents the premature segregation of damaged DNA to daughter cells during cell division. The protein is Cell division inhibitor SulA of Escherichia coli O7:K1 (strain IAI39 / ExPEC).